Consider the following 162-residue polypeptide: ATP synthase subunit delta, mitochondrial (162 aa).

The transit peptide at Met1–Tyr25 directs the protein to the mitochondrion.

It belongs to the ATPase epsilon chain family. F-type ATPases have 2 components, CF(1) - the catalytic core - and CF(0) - the membrane proton channel. CF(1) has five subunits: alpha(3), beta(3), gamma(1), delta(1), epsilon(1). CF(0) has three main subunits: a, b and c.

It is found in the mitochondrion. It localises to the mitochondrion inner membrane. Functionally, mitochondrial membrane ATP synthase (F(1)F(0) ATP synthase or Complex V) produces ATP from ADP in the presence of a proton gradient across the membrane which is generated by electron transport complexes of the respiratory chain. F-type ATPases consist of two structural domains, F(1) - containing the extramembraneous catalytic core, and F(0) - containing the membrane proton channel, linked together by a central stalk and a peripheral stalk. During catalysis, ATP turnover in the catalytic domain of F(1) is coupled via a rotary mechanism of the central stalk subunits to proton translocation. Part of the complex F(1) domain and of the central stalk which is part of the complex rotary element. Rotation of the central stalk against the surrounding alpha(3)beta(3) subunits leads to hydrolysis of ATP in three separate catalytic sites on the beta subunits. The sequence is that of ATP synthase subunit delta, mitochondrial (atpD) from Agaricus bisporus (White button mushroom).